Reading from the N-terminus, the 401-residue chain is Lipid-A-disaccharide synthase (401 aa).

This sequence belongs to the LpxB family.

It catalyses the reaction a lipid X + a UDP-2-N,3-O-bis[(3R)-3-hydroxyacyl]-alpha-D-glucosamine = a lipid A disaccharide + UDP + H(+). The protein operates within bacterial outer membrane biogenesis; LPS lipid A biosynthesis. Functionally, condensation of UDP-2,3-diacylglucosamine and 2,3-diacylglucosamine-1-phosphate to form lipid A disaccharide, a precursor of lipid A, a phosphorylated glycolipid that anchors the lipopolysaccharide to the outer membrane of the cell. This chain is Lipid-A-disaccharide synthase, found in Ruegeria pomeroyi (strain ATCC 700808 / DSM 15171 / DSS-3) (Silicibacter pomeroyi).